We begin with the raw amino-acid sequence, 237 residues long: Uridylate kinase (237 aa).

9–12 contacts ATP; it reads KLSG. The tract at residues 17–22 is involved in allosteric activation by GTP; the sequence is GSQGYG. Residue G51 participates in UMP binding. Residues G52 and R56 each contribute to the ATP site. UMP-binding positions include D71 and 132–139; that span reads CGNPFFTT. Residues T159, Y165, and D168 each coordinate ATP.

Belongs to the UMP kinase family. In terms of assembly, homohexamer.

It is found in the cytoplasm. It carries out the reaction UMP + ATP = UDP + ADP. It participates in pyrimidine metabolism; CTP biosynthesis via de novo pathway; UDP from UMP (UMPK route): step 1/1. With respect to regulation, allosterically activated by GTP. Inhibited by UTP. Catalyzes the reversible phosphorylation of UMP to UDP. The chain is Uridylate kinase from Synechococcus sp. (strain CC9605).